The sequence spans 810 residues: Phospholipase D alpha 2 (810 aa).

The C2 domain maps to 1-126 (MEECLLHGRL…LHGEEVDRWV (126 aa)). Ca(2+) is bound at residue Asp-187. Positions 327 to 365 (TMFTHHQKIVVVDSEMPSGGSRSRRIVSFVGGLDLCDGR) constitute a PLD phosphodiesterase 1 domain. Catalysis depends on residues His-332, Lys-334, and Asp-339. His-332 provides a ligand contact to a 1,2-diacyl-sn-glycero-3-phosphate. Ca(2+) contacts are provided by His-371 and His-405. A 1,2-diacyl-sn-glycero-3-phosphate contacts are provided by Gln-521 and His-661. One can recognise a PLD phosphodiesterase 2 domain in the interval 656–683 (FMIYVHTKMMIVDDEYIIIGSANINQRS). Residues His-661, Lys-663, and Asp-668 contribute to the active site. Glu-722 is a Ca(2+) binding site.

It belongs to the phospholipase D family. C2-PLD subfamily. Requires Ca(2+) as cofactor. As to expression, highly expressed in roots, stems and flowers, moderately in leaves, seedlings and siliques. Not detected in dry seeds.

The protein resides in the cytoplasm. It localises to the membrane. It is found in the vacuole. The protein localises to the cytoplasmic vesicle. Its subcellular location is the clathrin-coated vesicle. It carries out the reaction a 1,2-diacyl-sn-glycero-3-phosphocholine + H2O = a 1,2-diacyl-sn-glycero-3-phosphate + choline + H(+). Hydrolyzes glycerol-phospholipids at the terminal phosphodiesteric bond to generate phosphatidic acids (PA). Plays an important role in various cellular processes, including phytohormone action and response to stress, characterized by acidification of the cell. The chain is Phospholipase D alpha 2 from Arabidopsis thaliana (Mouse-ear cress).